We begin with the raw amino-acid sequence, 178 residues long: Acireductone dioxygenase (178 aa).

Positions 82, 84, 88, and 127 each coordinate Fe(2+). Ni(2+)-binding residues include H82, H84, E88, and H127. A Phosphoserine modification is found at S157.

Belongs to the acireductone dioxygenase (ARD) family. Fe(2+) serves as cofactor. Requires Ni(2+) as cofactor.

The protein resides in the cytoplasm. The protein localises to the nucleus. It catalyses the reaction 1,2-dihydroxy-5-(methylsulfanyl)pent-1-en-3-one + O2 = 4-methylsulfanyl-2-oxobutanoate + formate + 2 H(+). The catalysed reaction is 1,2-dihydroxy-5-(methylsulfanyl)pent-1-en-3-one + O2 = 3-(methylsulfanyl)propanoate + CO + formate + 2 H(+). Its pathway is amino-acid biosynthesis; L-methionine biosynthesis via salvage pathway; L-methionine from S-methyl-5-thio-alpha-D-ribose 1-phosphate: step 5/6. Its function is as follows. Catalyzes 2 different reactions between oxygen and the acireductone 1,2-dihydroxy-3-keto-5-methylthiopentene (DHK-MTPene) depending upon the metal bound in the active site. Fe-containing acireductone dioxygenase (Fe-ARD) produces formate and 2-keto-4-methylthiobutyrate (KMTB), the alpha-ketoacid precursor of methionine in the methionine recycle pathway. Ni-containing acireductone dioxygenase (Ni-ARD) produces methylthiopropionate, carbon monoxide and formate, and does not lie on the methionine recycle pathway. The protein is Acireductone dioxygenase (adi1) of Schizosaccharomyces pombe (strain 972 / ATCC 24843) (Fission yeast).